Consider the following 28-residue polypeptide: Probable small spore coat assembly protein B (28 aa).

A helical membrane pass occupies residues 4–24 (VFAGGFALLVVLFILLIIIGA).

It belongs to the SscA family.

It localises to the membrane. The chain is Probable small spore coat assembly protein B from Bacillus subtilis (strain 168).